Consider the following 333-residue polypeptide: Holliday junction branch migration complex subunit RuvB (333 aa).

The segment at 1–181 (MNDILNKEPM…FGISSHMEYY (181 aa)) is large ATPase domain (RuvB-L). ATP-binding positions include leucine 20, arginine 21, glycine 62, lysine 65, threonine 66, threonine 67, 128-130 (EDF), arginine 171, tyrosine 181, and arginine 218. Threonine 66 is a binding site for Mg(2+). A small ATPAse domain (RuvB-S) region spans residues 182–252 (QERDLEEIVK…ITDKALSILD (71 aa)). The interval 255-333 (AAGLDYIDQK…HLGYVYNEED (79 aa)) is head domain (RuvB-H). DNA contacts are provided by arginine 291, arginine 310, and arginine 315.

Belongs to the RuvB family. As to quaternary structure, homohexamer. Forms an RuvA(8)-RuvB(12)-Holliday junction (HJ) complex. HJ DNA is sandwiched between 2 RuvA tetramers; dsDNA enters through RuvA and exits via RuvB. An RuvB hexamer assembles on each DNA strand where it exits the tetramer. Each RuvB hexamer is contacted by two RuvA subunits (via domain III) on 2 adjacent RuvB subunits; this complex drives branch migration. In the full resolvosome a probable DNA-RuvA(4)-RuvB(12)-RuvC(2) complex forms which resolves the HJ.

Its subcellular location is the cytoplasm. The enzyme catalyses ATP + H2O = ADP + phosphate + H(+). In terms of biological role, the RuvA-RuvB-RuvC complex processes Holliday junction (HJ) DNA during genetic recombination and DNA repair, while the RuvA-RuvB complex plays an important role in the rescue of blocked DNA replication forks via replication fork reversal (RFR). RuvA specifically binds to HJ cruciform DNA, conferring on it an open structure. The RuvB hexamer acts as an ATP-dependent pump, pulling dsDNA into and through the RuvAB complex. RuvB forms 2 homohexamers on either side of HJ DNA bound by 1 or 2 RuvA tetramers; 4 subunits per hexamer contact DNA at a time. Coordinated motions by a converter formed by DNA-disengaged RuvB subunits stimulates ATP hydrolysis and nucleotide exchange. Immobilization of the converter enables RuvB to convert the ATP-contained energy into a lever motion, pulling 2 nucleotides of DNA out of the RuvA tetramer per ATP hydrolyzed, thus driving DNA branch migration. The RuvB motors rotate together with the DNA substrate, which together with the progressing nucleotide cycle form the mechanistic basis for DNA recombination by continuous HJ branch migration. Branch migration allows RuvC to scan DNA until it finds its consensus sequence, where it cleaves and resolves cruciform DNA. This chain is Holliday junction branch migration complex subunit RuvB, found in Lactococcus lactis subsp. lactis (strain IL1403) (Streptococcus lactis).